A 589-amino-acid polypeptide reads, in one-letter code: Phosphoenolpyruvate carboxykinase [GTP] (589 aa).

Substrate is bound by residues R75 and Y207 to G209. Residues K216 and H236 each coordinate Mn(2+). S258 lines the substrate pocket. Residue A259–N264 coordinates GTP. S260 is an active-site residue. Residue D287 coordinates Mn(2+). Residue N374–R376 participates in substrate binding. GTP contacts are provided by residues R376, R407, and F500–N503.

The protein belongs to the phosphoenolpyruvate carboxykinase [GTP] family. Mn(2+) is required as a cofactor.

Its subcellular location is the cytoplasm. It carries out the reaction oxaloacetate + GTP = phosphoenolpyruvate + GDP + CO2. It functions in the pathway carbohydrate biosynthesis; gluconeogenesis. In terms of biological role, catalyzes the conversion of oxaloacetate (OAA) to phosphoenolpyruvate (PEP), the rate-limiting step in the metabolic pathway that produces glucose from lactate and other precursors derived from the citric acid cycle. This is Phosphoenolpyruvate carboxykinase [GTP] from Thermoplasma volcanium (strain ATCC 51530 / DSM 4299 / JCM 9571 / NBRC 15438 / GSS1).